We begin with the raw amino-acid sequence, 382 residues long: MRSGGRGRPRLRLGERGLMEPLLPPKRRLLPRVRLLPLLLALAVGSAFYTIWSGWHRRTEELPLGRELRVPLIGSLPEARLRRVVGQLDPQRLWSTYLRPLLVVRTPGSPGNLQVRKFLEATLRSLTAGWHVELDPFTASTPLGPVDFGNVVATLDPRAARHLTLACHYDSKLFPPGSTPFVGATDSAVPCALLLELAQALDLELSRAKKQAAPVTLQLLFLDGEEALKEWGPKDSLYGSRHLAQLMESIPHSPGPTRIQAIELFMLLDLLGAPNPTFYSHFPRTVRWFHRLRSIEKRLHRLNLLQSHPQEVMYFQPGEPFGSVEDDHIPFLRRGVPVLHLISTPFPAVWHTPADTEVNLHPPTVHNLCRILAVFLAEYLGL.

The chain crosses the membrane as a helical span at residues Leu-35 to Trp-55. Cysteines 167 and 191 form a disulfide. Asp-186 lines the Zn(2+) pocket. Glu-225 serves as the catalytic Proton acceptor. Position 226 (Glu-226) interacts with Zn(2+). Catalysis depends on Asp-269, which acts as the Proton acceptor. Residue His-351 participates in Zn(2+) binding.

It belongs to the glutaminyl-peptide cyclotransferase family.

It localises to the golgi apparatus membrane. The enzyme catalyses N-terminal L-glutaminyl-[peptide] = N-terminal 5-oxo-L-prolyl-[peptide] + NH4(+). Its function is as follows. Responsible for the biosynthesis of pyroglutamyl peptides. The protein is Glutaminyl-peptide cyclotransferase-like protein (QPCTL) of Homo sapiens (Human).